Here is a 63-residue protein sequence, read N- to C-terminus: ORF6 protein (63 aa).

This sequence belongs to the coronaviruses accessory protein 6 family.

The protein resides in the host endoplasmic reticulum membrane. It is found in the host Golgi apparatus membrane. In terms of biological role, could be a determinant of virus virulence. Seems to stimulate cellular DNA synthesis in vitro. This Bat coronavirus HKU3 (BtCoV) protein is ORF6 protein.